Reading from the N-terminus, the 299-residue chain is Lipoyl synthase (299 aa).

Residues cysteine 45, cysteine 50, cysteine 56, cysteine 71, cysteine 75, cysteine 78, and serine 284 each contribute to the [4Fe-4S] cluster site. One can recognise a Radical SAM core domain in the interval 57-273 (YSKGTATFMI…GDVALAKDFL (217 aa)).

The protein belongs to the radical SAM superfamily. Lipoyl synthase family. [4Fe-4S] cluster is required as a cofactor.

The protein localises to the cytoplasm. The enzyme catalyses [[Fe-S] cluster scaffold protein carrying a second [4Fe-4S](2+) cluster] + N(6)-octanoyl-L-lysyl-[protein] + 2 oxidized [2Fe-2S]-[ferredoxin] + 2 S-adenosyl-L-methionine + 4 H(+) = [[Fe-S] cluster scaffold protein] + N(6)-[(R)-dihydrolipoyl]-L-lysyl-[protein] + 4 Fe(3+) + 2 hydrogen sulfide + 2 5'-deoxyadenosine + 2 L-methionine + 2 reduced [2Fe-2S]-[ferredoxin]. The protein operates within protein modification; protein lipoylation via endogenous pathway; protein N(6)-(lipoyl)lysine from octanoyl-[acyl-carrier-protein]: step 2/2. In terms of biological role, catalyzes the radical-mediated insertion of two sulfur atoms into the C-6 and C-8 positions of the octanoyl moiety bound to the lipoyl domains of lipoate-dependent enzymes, thereby converting the octanoylated domains into lipoylated derivatives. In Desulfotalea psychrophila (strain LSv54 / DSM 12343), this protein is Lipoyl synthase.